The following is a 284-amino-acid chain: Deoxyribonuclease-1 (284 aa).

An N-terminal signal peptide occupies residues M1 to A22. N40 is a glycosylation site (N-linked (GlcNAc...) asparagine). E100 is a catalytic residue. C123 and C126 form a disulfide bridge. An N-linked (GlcNAc...) asparagine glycan is attached at N128. The active site involves H156. A disulfide bridge connects residues C195 and C231.

Belongs to the DNase I family. Requires Ca(2+) as cofactor. It depends on Mg(2+) as a cofactor. Highest expression in pancreas.

The protein resides in the secreted. It is found in the zymogen granule. The protein localises to the nucleus envelope. The catalysed reaction is Endonucleolytic cleavage to 5'-phosphodinucleotide and 5'-phosphooligonucleotide end-products.. Its function is as follows. Serum endocuclease secreted into body fluids by a wide variety of exocrine and endocrine organs. Expressed by non-hematopoietic tissues and preferentially cleaves protein-free DNA. Among other functions, seems to be involved in cell death by apoptosis. Binds specifically to G-actin and blocks actin polymerization. Together with DNASE1L3, plays a key role in degrading neutrophil extracellular traps (NETs). NETs are mainly composed of DNA fibers and are released by neutrophils to bind pathogens during inflammation. Degradation of intravascular NETs by DNASE1 and DNASE1L3 is required to prevent formation of clots that obstruct blood vessels and cause organ damage following inflammation. This Canis lupus familiaris (Dog) protein is Deoxyribonuclease-1 (DNASE1).